We begin with the raw amino-acid sequence, 330 residues long: Phenylalanine--tRNA ligase alpha subunit (330 aa).

Glu246 contacts Mg(2+).

This sequence belongs to the class-II aminoacyl-tRNA synthetase family. Phe-tRNA synthetase alpha subunit type 1 subfamily. As to quaternary structure, tetramer of two alpha and two beta subunits. Mg(2+) serves as cofactor.

Its subcellular location is the cytoplasm. It catalyses the reaction tRNA(Phe) + L-phenylalanine + ATP = L-phenylalanyl-tRNA(Phe) + AMP + diphosphate + H(+). The polypeptide is Phenylalanine--tRNA ligase alpha subunit (Sulfurovum sp. (strain NBC37-1)).